We begin with the raw amino-acid sequence, 201 residues long: RILP-like protein 2 (201 aa).

The 95-residue stretch at 14–108 folds into the RH1 domain; sequence GPEIALDKDP…LKDGPQMGVG (95 aa). The stretch at 67–155 forms a coiled coil; that stretch reads LEMLEALVNQ…AQDELQCYKS (89 aa). In terms of domain architecture, RH2 spans 121-197; the sequence is RPRFTLQELR…TVKSLFSFKQ (77 aa). Residues 177-201 form a disordered region; that stretch reads SPRENESKEKSTVKSLFSFKQGKQT. Residues 179–188 are compositionally biased toward basic and acidic residues; it reads RENESKEKST.

This sequence belongs to the RILPL family.

The protein localises to the cytoplasm. Its subcellular location is the cytosol. The protein resides in the cytoskeleton. It is found in the microtubule organizing center. It localises to the centrosome. The protein localises to the cell projection. Its subcellular location is the cilium. Involved in cell shape and neuronal morphogenesis, positively regulating the establishment and maintenance of dendritic spines. Plays a role in cellular protein transport. This chain is RILP-like protein 2 (rilpl2), found in Xenopus tropicalis (Western clawed frog).